We begin with the raw amino-acid sequence, 358 residues long: S-adenosylmethionine:tRNA ribosyltransferase-isomerase (358 aa).

This sequence belongs to the QueA family. Monomer.

Its subcellular location is the cytoplasm. It carries out the reaction 7-aminomethyl-7-carbaguanosine(34) in tRNA + S-adenosyl-L-methionine = epoxyqueuosine(34) in tRNA + adenine + L-methionine + 2 H(+). It participates in tRNA modification; tRNA-queuosine biosynthesis. Its function is as follows. Transfers and isomerizes the ribose moiety from AdoMet to the 7-aminomethyl group of 7-deazaguanine (preQ1-tRNA) to give epoxyqueuosine (oQ-tRNA). The chain is S-adenosylmethionine:tRNA ribosyltransferase-isomerase from Rhodopseudomonas palustris (strain BisA53).